We begin with the raw amino-acid sequence, 369 residues long: DNA replication and repair protein RecF (369 aa).

ATP is bound at residue 30 to 37 (GRNAQGKT).

The protein belongs to the RecF family.

It localises to the cytoplasm. Functionally, the RecF protein is involved in DNA metabolism; it is required for DNA replication and normal SOS inducibility. RecF binds preferentially to single-stranded, linear DNA. It also seems to bind ATP. This chain is DNA replication and repair protein RecF, found in Streptococcus agalactiae serotype Ia (strain ATCC 27591 / A909 / CDC SS700).